The primary structure comprises 349 residues: Probable ethanolamine kinase A (349 aa).

It belongs to the choline/ethanolamine kinase family.

Its subcellular location is the cytoplasm. The catalysed reaction is ethanolamine + ATP = phosphoethanolamine + ADP + H(+). It functions in the pathway phospholipid metabolism; phosphatidylethanolamine biosynthesis; phosphatidylethanolamine from ethanolamine: step 1/3. Its function is as follows. Highly specific for ethanolamine phosphorylation. May be a rate-controlling step in phosphatidylethanolamine biosynthesis. This Dictyostelium discoideum (Social amoeba) protein is Probable ethanolamine kinase A (etnkA).